Reading from the N-terminus, the 326-residue chain is Protein BCCIP homolog (326 aa).

The segment at 37–81 (SHPEDCQCSDEDISFDEKQKIPNLPRKGKEEQVSDSSDEEDSQED) is disordered. The residue at position 45 (Ser45) is a Phosphoserine. A compositionally biased stretch (acidic residues) spans 72-81 (SSDEEDSQED).

Belongs to the BCP1 family.

This chain is Protein BCCIP homolog, found in Arabidopsis thaliana (Mouse-ear cress).